Here is a 378-residue protein sequence, read N- to C-terminus: Anhydro-N-acetylmuramic acid kinase (378 aa).

Gly-9–Asp-16 lines the ATP pocket.

This sequence belongs to the anhydro-N-acetylmuramic acid kinase family.

The enzyme catalyses 1,6-anhydro-N-acetyl-beta-muramate + ATP + H2O = N-acetyl-D-muramate 6-phosphate + ADP + H(+). It participates in amino-sugar metabolism; 1,6-anhydro-N-acetylmuramate degradation. Its pathway is cell wall biogenesis; peptidoglycan recycling. Functionally, catalyzes the specific phosphorylation of 1,6-anhydro-N-acetylmuramic acid (anhMurNAc) with the simultaneous cleavage of the 1,6-anhydro ring, generating MurNAc-6-P. Is required for the utilization of anhMurNAc either imported from the medium or derived from its own cell wall murein, and thus plays a role in cell wall recycling. This Synechococcus sp. (strain ATCC 27144 / PCC 6301 / SAUG 1402/1) (Anacystis nidulans) protein is Anhydro-N-acetylmuramic acid kinase.